Reading from the N-terminus, the 481-residue chain is Glycogen synthase (481 aa).

K15 is a binding site for ADP-alpha-D-glucose.

Belongs to the glycosyltransferase 1 family. Bacterial/plant glycogen synthase subfamily.

The catalysed reaction is [(1-&gt;4)-alpha-D-glucosyl](n) + ADP-alpha-D-glucose = [(1-&gt;4)-alpha-D-glucosyl](n+1) + ADP + H(+). It participates in glycan biosynthesis; glycogen biosynthesis. Its function is as follows. Synthesizes alpha-1,4-glucan chains using ADP-glucose. The polypeptide is Glycogen synthase (Thermosipho melanesiensis (strain DSM 12029 / CIP 104789 / BI429)).